Here is a 1049-residue protein sequence, read N- to C-terminus: DEAD-box ATP-dependent RNA helicase 42 (1049 aa).

2 disordered regions span residues 1–279 and 299–358; these read MGSS…DEID and MPAA…DDEE. The segment covering 64–106 has biased composition (basic and acidic residues); the sequence is KERDREERKAREREEREKEKERERARRREERDREERSRRREAA. The segment covering 118–131 has biased composition (basic residues); that stretch reads RKRRRRSSHHHHHH. Composition is skewed to basic and acidic residues over residues 161 to 170 and 181 to 199; these read KKEEEQKQLD and KEWQ…REQE. Positions 201–214 are enriched in low complexity; it reads AGVGTSAAAAAAPA. Acidic residues predominate over residues 229–239; that stretch reads DGEESDEEGNQ. Residues 262–272 are compositionally biased toward low complexity; the sequence is NGGDNANGANA. Residues 304–313 are compositionally biased toward basic and acidic residues; it reads VDDKNDKSAK. Over residues 335–358 the composition is skewed to acidic residues; the sequence is EDSDSDYADDEDDEGGSEDEDDEE. The short motif at 424-452 is the Q motif element; it reads KTWVQSGLTSKLLDTIKKLGFEKPMSIQA. One can recognise a Helicase ATP-binding domain in the interval 455–633; that stretch reads LPIIMSGRDC…RKVLTKPVEI (179 aa). 468-475 contacts ATP; the sequence is AKTGSGKT. The DEAD box motif lies at 581-584; that stretch reads DEAD. Residues 644-805 enclose the Helicase C-terminal domain; sequence DITQLVEVRP…AVPEDLKGLA (162 aa). The disordered stretch occupies residues 816–868; sequence TEQAHGTGYGGSGFKFNEEEDEARKSAKKAQAREYGYEEDKSDSDSDEEGGVR. Over residues 855 to 864 the composition is skewed to acidic residues; it reads DKSDSDSDEE. A coiled-coil region spans residues 1012-1037; it reads TELSVKKAKAELKRVLEDCANHALNL.

The protein belongs to the DEAD box helicase family. DDX46/PRP5 subfamily.

It catalyses the reaction ATP + H2O = ADP + phosphate + H(+). This Oryza sativa subsp. japonica (Rice) protein is DEAD-box ATP-dependent RNA helicase 42.